We begin with the raw amino-acid sequence, 255 residues long: Probable transcriptional regulator ycf27 (255 aa).

A Response regulatory domain is found at 9–122; it reads KILIADDESS…ELEARIRCVL (114 aa). Position 58 is a 4-aspartylphosphate (Asp58). A DNA-binding region (H-T-H motif) is located at residues 78 to 96; it reads DIPIIMLTALGDVTDRITG. The segment at residues 137 to 238 is a DNA-binding region (ompR/PhoB-type); it reads SGIINIGFLK…SRGTGYLFQR (102 aa).

The protein localises to the plastid. It is found in the chloroplast. Functionally, probable promoter-specific protein mediating the interaction between DNA and RNA polymerase. The protein is Probable transcriptional regulator ycf27 (ycf27) of Galdieria sulphuraria (Red alga).